Consider the following 291-residue polypeptide: NAD kinase (291 aa).

The active-site Proton acceptor is Asp73. NAD(+) contacts are provided by residues 73-74 (DG), 147-148 (ND), Arg175, Asp177, and Gln246.

It belongs to the NAD kinase family. A divalent metal cation is required as a cofactor.

The protein resides in the cytoplasm. The enzyme catalyses NAD(+) + ATP = ADP + NADP(+) + H(+). Functionally, involved in the regulation of the intracellular balance of NAD and NADP, and is a key enzyme in the biosynthesis of NADP. Catalyzes specifically the phosphorylation on 2'-hydroxyl of the adenosine moiety of NAD to yield NADP. This is NAD kinase from Laribacter hongkongensis (strain HLHK9).